Here is a 450-residue protein sequence, read N- to C-terminus: Glucose-6-phosphate isomerase (450 aa).

At T39 the chain carries Phosphothreonine. Residue E291 is the Proton donor of the active site. Catalysis depends on residues H312 and K426.

Belongs to the GPI family.

Its subcellular location is the cytoplasm. The enzyme catalyses alpha-D-glucose 6-phosphate = beta-D-fructose 6-phosphate. It functions in the pathway carbohydrate biosynthesis; gluconeogenesis. The protein operates within carbohydrate degradation; glycolysis; D-glyceraldehyde 3-phosphate and glycerone phosphate from D-glucose: step 2/4. Catalyzes the reversible isomerization of glucose-6-phosphate to fructose-6-phosphate. The protein is Glucose-6-phosphate isomerase of Bacillus cereus (strain AH187).